The primary structure comprises 370 residues: sn-glycerol-3-phosphate import ATP-binding protein UgpC (370 aa).

The ABC transporter domain maps to 4–235; the sequence is LRLDGIRKRY…PATRFVASFL (232 aa). 37 to 44 serves as a coordination point for ATP; it reads GPSGCGKS.

Belongs to the ABC transporter superfamily. sn-glycerol-3-phosphate importer (TC 3.A.1.1.3) family. As to quaternary structure, the complex is composed of two ATP-binding proteins (UgpC), two transmembrane proteins (UgpA and UgpE) and a solute-binding protein (UgpB).

The protein resides in the cell inner membrane. It catalyses the reaction sn-glycerol 3-phosphate(out) + ATP + H2O = sn-glycerol 3-phosphate(in) + ADP + phosphate + H(+). Functionally, part of the ABC transporter complex UgpBAEC involved in sn-glycerol-3-phosphate (G3P) import. Responsible for energy coupling to the transport system. The chain is sn-glycerol-3-phosphate import ATP-binding protein UgpC from Chromohalobacter salexigens (strain ATCC BAA-138 / DSM 3043 / CIP 106854 / NCIMB 13768 / 1H11).